Consider the following 146-residue polypeptide: Holo-[acyl-carrier-protein] synthase (146 aa).

Mg(2+) contacts are provided by aspartate 9 and glutamate 63.

Belongs to the P-Pant transferase superfamily. AcpS family. It depends on Mg(2+) as a cofactor.

It localises to the cytoplasm. The catalysed reaction is apo-[ACP] + CoA = holo-[ACP] + adenosine 3',5'-bisphosphate + H(+). Transfers the 4'-phosphopantetheine moiety from coenzyme A to a Ser of acyl-carrier-protein. The polypeptide is Holo-[acyl-carrier-protein] synthase (Burkholderia multivorans (strain ATCC 17616 / 249)).